Reading from the N-terminus, the 331-residue chain is 6-phosphogluconolactonase (331 aa).

Belongs to the cycloisomerase 2 family.

It catalyses the reaction 6-phospho-D-glucono-1,5-lactone + H2O = 6-phospho-D-gluconate + H(+). Its pathway is carbohydrate degradation; pentose phosphate pathway; D-ribulose 5-phosphate from D-glucose 6-phosphate (oxidative stage): step 2/3. Its function is as follows. Catalyzes the hydrolysis of 6-phosphogluconolactone to 6-phosphogluconate. This chain is 6-phosphogluconolactonase, found in Klebsiella pneumoniae subsp. pneumoniae (strain ATCC 700721 / MGH 78578).